Consider the following 183-residue polypeptide: Ferritin heavy polypeptide-like 17 (183 aa).

Residues 11 to 160 (QKYDTNCDAA…GYVSNLRKIC (150 aa)) enclose the Ferritin-like diiron domain. Fe cation is bound by residues Glu28, His66, Glu108, and Gln142.

The protein belongs to the ferritin family. Testis specific. Also expressed in several cancers.

The chain is Ferritin heavy polypeptide-like 17 (FTHL17) from Homo sapiens (Human).